The primary structure comprises 297 residues: Cell division protein FtsQ (297 aa).

Over 1–33 the chain is Cytoplasmic; that stretch reads MRPLSFRRRTAQARPDPAPSRLSYRVQRLLLTP. Residues 34–54 traverse the membrane as a helical segment; sequence LFHALIRVGLPAFVLAFGVGW. Residues 55–297 are Periplasmic-facing; sequence LLQNQELRDE…IRGLTNDRIE (243 aa). Residues 82–150 enclose the POTRA domain; that stretch reads FMVNAMSVSG…GILAIEIVER (69 aa).

The protein belongs to the FtsQ/DivIB family. FtsQ subfamily.

It is found in the cell inner membrane. Its function is as follows. Essential cell division protein. The polypeptide is Cell division protein FtsQ (Dinoroseobacter shibae (strain DSM 16493 / NCIMB 14021 / DFL 12)).